A 353-amino-acid chain; its full sequence is Ferredoxin--NADP reductase (353 aa).

Thr-25, Glu-44, Gln-52, Tyr-57, Val-97, Phe-132, Asp-298, and Ser-339 together coordinate FAD.

This sequence belongs to the ferredoxin--NADP reductase type 2 family. In terms of assembly, homodimer. FAD is required as a cofactor.

It catalyses the reaction 2 reduced [2Fe-2S]-[ferredoxin] + NADP(+) + H(+) = 2 oxidized [2Fe-2S]-[ferredoxin] + NADPH. This Chlorobium phaeovibrioides (strain DSM 265 / 1930) (Prosthecochloris vibrioformis (strain DSM 265)) protein is Ferredoxin--NADP reductase.